Consider the following 83-residue polypeptide: Beta-toxin Ct7 (83 aa).

An N-terminal signal peptide occupies residues 1-18 (MKVLILIIASVLLIGVEC). The LCN-type CS-alpha/beta domain maps to 19 to 81 (KDGYPMNSEG…VWDSATNKCG (63 aa)). 4 disulfides stabilise this stretch: cysteine 29–cysteine 80, cysteine 33–cysteine 54, cysteine 40–cysteine 61, and cysteine 44–cysteine 63. Glycine 81 carries the glycine amide modification. Glycine 82 is a propeptide.

It belongs to the long (4 C-C) scorpion toxin superfamily. Sodium channel inhibitor family. Beta subfamily. In terms of tissue distribution, expressed by the venom gland.

The protein resides in the secreted. In terms of biological role, beta toxins bind voltage-independently at site-4 of sodium channels (Nav) and shift the voltage of activation toward more negative potentials thereby affecting sodium channel activation and promoting spontaneous and repetitive firing. Is possibly toxic to mice, freshwater shrimp and crickets. This Centruroides tecomanus (Scorpion) protein is Beta-toxin Ct7.